Here is a 151-residue protein sequence, read N- to C-terminus: uncharacterized protein (151 aa).

Transmembrane regions (helical) follow at residues 14–34, 45–65, and 91–111; these read GAAL…YWLI, ISLV…GYLI, and VIVA…ASLI.

Its subcellular location is the cell membrane. This is an uncharacterized protein from Bacillus subtilis (strain 168).